Reading from the N-terminus, the 153-residue chain is Transcriptional repressor NrdR (153 aa).

A zinc finger spans residues 3-34; it reads CPFCNSTDTQVKDSRSIENDMLIRRRRVCLVC. One can recognise an ATP-cone domain in the interval 49-139; sequence FMVVKKNGET…VYMNFRNIND (91 aa).

It belongs to the NrdR family. Zn(2+) serves as cofactor.

In terms of biological role, negatively regulates transcription of bacterial ribonucleotide reductase nrd genes and operons by binding to NrdR-boxes. The sequence is that of Transcriptional repressor NrdR from Ehrlichia chaffeensis (strain ATCC CRL-10679 / Arkansas).